Consider the following 183-residue polypeptide: Bifunctional protein PyrR (183 aa).

The PRPP-binding signature appears at 98 to 110; sequence VVLVDDVLYTGRT.

The protein belongs to the purine/pyrimidine phosphoribosyltransferase family. PyrR subfamily.

It carries out the reaction UMP + diphosphate = 5-phospho-alpha-D-ribose 1-diphosphate + uracil. Functionally, regulates the transcription of the pyrimidine nucleotide (pyr) operon in response to exogenous pyrimidines. Its function is as follows. Also displays a weak uracil phosphoribosyltransferase activity which is not physiologically significant. This is Bifunctional protein PyrR from Roseiflexus sp. (strain RS-1).